The sequence spans 473 residues: Protein translocase subunit SecA (473 aa).

Asp127 provides a ligand contact to ATP. The interval 424–447 (VAEGKAVHQDTSKQEPKKKQPIRK) is disordered. Residues Cys457, Cys459, Cys468, and Cys469 each contribute to the Zn(2+) site.

This sequence belongs to the SecA family. As to quaternary structure, monomer and homodimer. Part of the essential Sec protein translocation apparatus which comprises SecA, SecYEG and auxiliary proteins SecDF. Other proteins may also be involved. It depends on Zn(2+) as a cofactor.

It localises to the cell membrane. The protein resides in the cytoplasm. The catalysed reaction is ATP + H2O + cellular proteinSide 1 = ADP + phosphate + cellular proteinSide 2.. Its function is as follows. Part of the Sec protein translocase complex. Interacts with the SecYEG preprotein conducting channel. Has a central role in coupling the hydrolysis of ATP to the transfer of proteins into and across the cell membrane, serving as an ATP-driven molecular motor driving the stepwise translocation of polypeptide chains across the membrane. This Cytobacillus firmus (Bacillus firmus) protein is Protein translocase subunit SecA.